A 55-amino-acid chain; its full sequence is Conotoxin vc5b (55 aa).

The N-terminal stretch at 1 to 15 (VILLLLIASAPSVDA) is a signal peptide. Positions 16 to 41 (QPKTKDDVPLAPLHDNAKSALQHLNQ) are excised as a propeptide. Q53 bears the Glutamine amide mark.

Post-translationally, contains 2 disulfide bonds that can be either 'C1-C3, C2-C4' or 'C1-C4, C2-C3', since these disulfide connectivities have been observed for conotoxins with cysteine framework V (for examples, see AC P0DQQ7 and AC P81755). As to expression, expressed by the venom duct.

It localises to the secreted. The sequence is that of Conotoxin vc5b from Conus victoriae (Queen Victoria cone).